The following is a 193-amino-acid chain: ECF RNA polymerase sigma factor SigK (193 aa).

Residues 35-101 (LYDRTRSRVY…RRAVDRVRSE (67 aa)) are sigma-70 factor domain-2. The Polymerase core binding signature appears at 59 to 62 (ETTQ). Residues 140–187 (MGSLSDLQREAIQLAYYEGLTYVQVSERLSANLATIKSRMRGGIRGLK) form a sigma-70 factor domain-4 region. The H-T-H motif DNA-binding region spans 161 to 180 (YVQVSERLSANLATIKSRMR).

This sequence belongs to the sigma-70 factor family. ECF subfamily. As to quaternary structure, interacts transiently with the RNA polymerase catalytic core formed by RpoA, RpoB, RpoC and RpoZ (2 alpha, 1 beta, 1 beta' and 1 omega subunit) to form the RNA polymerase holoenzyme that can initiate transcription. Interacts (via sigma-70 factor domain 4) with anti-sigma-K factor RskA.

Its function is as follows. Sigma factors are initiation factors that promote the attachment of RNA polymerase to specific initiation sites and are then released. Extracytoplasmic function (ECF) sigma factors are held in an inactive form by an anti-sigma factor until released by regulated intramembrane proteolysis. The chain is ECF RNA polymerase sigma factor SigK (sigK) from Mycobacterium sp. (strain KMS).